A 101-amino-acid chain; its full sequence is RNA-binding protein Hfq (101 aa).

A Sm domain is found at 9-68 (DPFLNALRRERVPVSIYLVNGIKLQGQVESFDQFVILLKNTVSQMVYKHAISTVVPSRPV). Residues 63–101 (VPSRPVSHHSNNPSGSTNNYHGSNPSAPQQPQQDSDDAE) form a disordered region. Residues 70–86 (HHSNNPSGSTNNYHGSN) show a composition bias toward polar residues.

The protein belongs to the Hfq family. In terms of assembly, homohexamer.

In terms of biological role, RNA chaperone that binds small regulatory RNA (sRNAs) and mRNAs to facilitate mRNA translational regulation in response to envelope stress, environmental stress and changes in metabolite concentrations. Also binds with high specificity to tRNAs. Positively regulates the expression of the yst gene for heat-stable enterotoxin (Y-ST). The sequence is that of RNA-binding protein Hfq from Yersinia enterocolitica.